We begin with the raw amino-acid sequence, 356 residues long: Butyrate kinase (356 aa).

This sequence belongs to the acetokinase family.

The protein localises to the cytoplasm. The catalysed reaction is butanoate + ATP = butanoyl phosphate + ADP. The protein operates within lipid metabolism; butanoate metabolism. In terms of biological role, catalyzes the conversion of butyryl-CoA through butyryl phosphate to butyrate. This Clostridium perfringens (strain 13 / Type A) protein is Butyrate kinase (buk).